The chain runs to 270 residues: Large ribosomal subunit protein uL30 (270 aa).

Residue M1 is modified to N-acetylmethionine. 6 repeat units span residues 7 to 18 (KKKKVATVPGTL), 19 to 29 (KKKVPAGPKTL), 30 to 40 (KKKVPAVPETL), 41 to 52 (KKKRRNFAELKV), 53 to 64 (KRLRKKFALKTL), and 65 to 76 (RKARRKLIYEKA). The tract at residues 7-76 (KKKKVATVPG…ARRKLIYEKA (70 aa)) is 6 X 12 AA tandem repeats. T39 bears the Phosphothreonine mark. An N6-acetyllysine modification is found at K146. K149 carries the N6-succinyllysine modification. Y161 bears the Phosphotyrosine mark.

Belongs to the universal ribosomal protein uL30 family. As to quaternary structure, component of the large ribosomal subunit. Homodimer. Interacts with DHX33.

Its subcellular location is the cytoplasm. Functionally, component of the large ribosomal subunit. The ribosome is a large ribonucleoprotein complex responsible for the synthesis of proteins in the cell. Binds to G-rich structures in 28S rRNA and in mRNAs. Plays a regulatory role in the translation apparatus; inhibits cell-free translation of mRNAs. This is Large ribosomal subunit protein uL30 (Rpl7) from Mus musculus (Mouse).